Consider the following 1202-residue polypeptide: MGNLKSVGQEPGPPCGLGLGLGLGLCGKQGPASPAPEPSQAPVPPSPTRPAPDHSPPLTRPPDGPKFPRVKNWEVGSITYDTLSAQAQQDGPCTPRRCLGSLVFPRKLQSRPTQGPSPTEQLLGQARDFINQYYNSIKRSGSQAHEQRLQEVEAEVVATGTYQLRESELVFGAKQAWRNAPRCVGRIQWGKLQVFDARDCRTAQEMFTYICNHIKYATNRGNLRSAITVFPQRYAGRGDFRIWNSQLVRYAGYRQQDGSVRGDPANVEITELCIQHGWTPGNGRFDVLPLLLQAPDEPPELFTLPPELVLEVPLEHPTLEWFAALGLRWYALPAVSNMLLEIGGLEFPAAPFSGWYMSSEIGMRDLCDPHRYNILEDVAVCMDLDTRTTSSLWKDKAAVEINVAVLYSYQLAKVTIVDHHAATASFMKHLENEQKARGGCPADWAWIVPPISGSLTPVFHQEMVNYFLSPAFRYQPDPWKGSAAKGTGITRKKTFKEVANAVKISASLMGTVMAKRVKATILYGSETGRAQSYAQQLGRLFRKAFDPRVLCMDEYDVVSLEHEALVLVVTSTFGNGDPPENGESFAAALMEMSGPYNSSPRPEQHKSYKIRFNSVSCSDPLVSSWRRKRKESSNTDSAGALGTLRFCVFGLGSRAYPHFCAFARAVDTRLEELGGERLLQLGQGDELCGQEEAFRGWAQAAFQAACETFCVGEDAKAAARDIFSPKRSWKRQRYRLSTQAESLQLLPRLTHVHRRKMFQATILSVENLQSSKSTRATILVRLDTGSQEGLQYQPGDHIGVCPPNRPGLVEALLSRVEDPPPSTEPVAVEQLEKGSPGGPPPGWVRDPRLPPCTLRQALTYFLDITSPPSPRLLRLLSTLAEESSEQQELEALSQDPRRYEEWKWFRCPTLLEVLEQFPSVALPAPLILTQLPLLQPRYYSVSSAPSAHPGEIHLTVAVLAYRTQDGLGPLHYGVCSTWMSQLKAGDPVPCFIRGAPSFRLPPDPNLPCILVGPGTGIAPFRGFWQDRLHDIEIKGLQPAPMTLVFGCRCSQLDHLYRDEVLDAQQRGVFGQVLTAFSRDPGSPKTYVQDLLRTELAAEVHRVLCLEQGHMFVCGDVTMATSVLQTVQRILATEGSMELDEAGDVIGVLRDQQRYHEDIFGLTLRTQEVTSRIRTQSFSLQERQLRGAVPWSFDPPTQETPGS.

Residues 1–70 (MGNLKSVGQE…PPDGPKFPRV (70 aa)) form a disordered region. A lipid anchor (N-myristoyl glycine) is attached at Gly-2. S-palmitoyl cysteine attachment occurs at residues Cys-15 and Cys-26. The segment covering 15 to 27 (CGLGLGLGLGLCG) has biased composition (gly residues). Positions 33–65 (SPAPEPSQAPVPPSPTRPAPDHSPPLTRPPDGP) are enriched in pro residues. Zn(2+) contacts are provided by Cys-93 and Cys-98. The interval 97 to 485 (RCLGSLVFPR…PDPWKGSAAK (389 aa)) is interaction with NOSIP. Residue Ser-101 coordinates (6R)-L-erythro-5,6,7,8-tetrahydrobiopterin. Heme b is bound at residue Cys-183. The L-arginine site is built by Gln-246, Trp-355, Tyr-356, and Glu-360. Residues Ala-445, Trp-446, and Phe-459 each contribute to the (6R)-L-erythro-5,6,7,8-tetrahydrobiopterin site. Tyr-474 contributes to the heme b binding site. The segment at 489–509 (ITRKKTFKEVANAVKISASLM) is calmodulin-binding. Position 494 is a phosphothreonine; by AMPK (Thr-494). A Flavodoxin-like domain is found at 519–702 (ATILYGSETG…AFRGWAQAAF (184 aa)). 6 residues coordinate FMN: Ser-525, Glu-526, Thr-527, Arg-529, Ser-571, and Thr-572. Phosphoserine is present on residues Ser-614, Ser-632, and Ser-637. Residues Ser-653, Cys-660, Glu-686, and Gln-690 each contribute to the FMN site. An FAD-binding FR-type domain is found at 755–1001 (RKMFQATILS…IRGAPSFRLP (247 aa)). Arg-775 lines the NADP(+) pocket. FAD is bound at residue His-797. A disordered region spans residues 817–843 (EDPPPSTEPVAVEQLEKGSPGGPPPGW). Residue Ser-835 is modified to Phosphoserine. Residues Arg-937, Tyr-939, Ser-940, Thr-955, Ala-957, Tyr-961, Val-974, Cys-975, and Ser-976 each coordinate FAD. 7 residues coordinate NADP(+): Thr-1015, Arg-1048, Ser-1077, Arg-1078, Lys-1084, Tyr-1086, and Gln-1088. Thr-1174 is modified (phosphothreonine). A Phosphoserine; by AMPK modification is found at Ser-1176. The residue at position 1178 (Ser-1178) is a Phosphoserine.

This sequence belongs to the NOS family. As to quaternary structure, homodimer. Interacts with NOSIP and NOSTRIN. Interacts with HSP90AB1. Forms a complex with ASL, ASS1 and SLC7A1; the complex regulates cell-autonomous L-arginine synthesis and citrulline recycling while channeling extracellular L-arginine to nitric oxide synthesis pathway. Heme b serves as cofactor. FAD is required as a cofactor. The cofactor is FMN. Requires (6R)-L-erythro-5,6,7,8-tetrahydrobiopterin as cofactor. Phosphorylation by AMPK at Ser-1176 in the presence of Ca(2+)-calmodulin (CaM) activates activity. In absence of Ca(2+)-calmodulin, AMPK also phosphorylates Thr-494, resulting in inhibition of activity. Expressed constitutively by vascular endothelium. Detected in alveolar and serosal epithelial cells as well as in endothelial cells in one day old rat. In adult lung, detected in rare endothelial cells.

It is found in the membrane. It localises to the caveola. Its subcellular location is the cytoplasm. The protein localises to the cytoskeleton. The protein resides in the golgi apparatus. It is found in the cell membrane. The enzyme catalyses 2 L-arginine + 3 NADPH + 4 O2 + H(+) = 2 L-citrulline + 2 nitric oxide + 3 NADP(+) + 4 H2O. Stimulated by calcium/calmodulin. Inhibited by NOSIP and NOSTRIN. Produces nitric oxide (NO) which is implicated in vascular smooth muscle relaxation through a cGMP-mediated signal transduction pathway. NO mediates vascular endothelial growth factor (VEGF)-induced angiogenesis in coronary vessels and promotes blood clotting through the activation of platelets. This Rattus norvegicus (Rat) protein is Nitric oxide synthase 3.